The following is a 291-amino-acid chain: Small ribosomal subunit biogenesis GTPase RsgA (291 aa).

A CP-type G domain is found at 63–221; it reads QNELKRPPVS…VADTPGFSAL (159 aa). GTP is bound by residues 112–115 and 164–172; these read TKKD and GQSGVGKST. Residues cysteine 245, cysteine 250, histidine 252, and cysteine 258 each coordinate Zn(2+).

Belongs to the TRAFAC class YlqF/YawG GTPase family. RsgA subfamily. As to quaternary structure, monomer. Associates with 30S ribosomal subunit, binds 16S rRNA. Requires Zn(2+) as cofactor.

It is found in the cytoplasm. Its function is as follows. One of several proteins that assist in the late maturation steps of the functional core of the 30S ribosomal subunit. Helps release RbfA from mature subunits. May play a role in the assembly of ribosomal proteins into the subunit. Circularly permuted GTPase that catalyzes slow GTP hydrolysis, GTPase activity is stimulated by the 30S ribosomal subunit. The sequence is that of Small ribosomal subunit biogenesis GTPase RsgA from Staphylococcus carnosus (strain TM300).